The chain runs to 122 residues: Large ribosomal subunit protein uL14 (122 aa).

It belongs to the universal ribosomal protein uL14 family. Part of the 50S ribosomal subunit. Forms a cluster with proteins L3 and L19. In the 70S ribosome, L14 and L19 interact and together make contacts with the 16S rRNA in bridges B5 and B8.

Binds to 23S rRNA. Forms part of two intersubunit bridges in the 70S ribosome. In Methylobacterium radiotolerans (strain ATCC 27329 / DSM 1819 / JCM 2831 / NBRC 15690 / NCIMB 10815 / 0-1), this protein is Large ribosomal subunit protein uL14.